The primary structure comprises 260 residues: Snake venom serine protease homolog 2A (260 aa).

A signal peptide spans 1-18 (MVLIRVLANLLILQLSYA). The propeptide occupies 19–24 (QKSSEL). The Peptidase S1 domain maps to 25-251 (IIGGDECNIN…HLDWIKSIIA (227 aa)). 6 disulfides stabilise this stretch: Cys31–Cys165, Cys52–Cys68, Cys100–Cys258, Cys144–Cys212, Cys176–Cys191, and Cys202–Cys227. Asn83, Asn123, and Asn124 each carry an N-linked (GlcNAc...) asparagine glycan.

The protein belongs to the peptidase S1 family. Snake venom subfamily. In terms of tissue distribution, expressed by the venom gland.

The protein localises to the secreted. In terms of biological role, snake venom serine protease homolog that may act in the hemostasis system of the prey. This Craspedocephalus gramineus (Bamboo pit viper) protein is Snake venom serine protease homolog 2A (TLG2A).